A 234-amino-acid chain; its full sequence is UPF0104 membrane protein MJ1078 (234 aa).

The next 5 membrane-spanning stretches (helical) occupy residues 32 to 52, 70 to 90, 123 to 143, 164 to 184, and 198 to 218; these read VGTV…LLFI, IKWG…FLIV, LITL…FIFL, LTAI…LIYI, and VLIL…AIMF.

The protein belongs to the UPF0104 family.

The protein localises to the cell membrane. This is UPF0104 membrane protein MJ1078 from Methanocaldococcus jannaschii (strain ATCC 43067 / DSM 2661 / JAL-1 / JCM 10045 / NBRC 100440) (Methanococcus jannaschii).